Here is a 44-residue protein sequence, read N- to C-terminus: MKRTFQPNRARRKKKIGFRARMDTSGGRRILSARRRKGRKTISA.

Residues 21-44 (RMDTSGGRRILSARRRKGRKTISA) are disordered. Over residues 31–44 (LSARRRKGRKTISA) the composition is skewed to basic residues.

The protein belongs to the bacterial ribosomal protein bL34 family.

This is Large ribosomal subunit protein bL34 from Endomicrobium trichonymphae.